We begin with the raw amino-acid sequence, 276 residues long: MTWHARLQLDYRREGPRTVAGFLHDGPLRILQSLYPEGGGICHNVLVHPPGGLVGGDTLDIAATVAPGAHGLVTTPGATRFYRSTGAPALQRTQATLAAGARLEWLPLEALCYSACQAENRLTLSLSPGAECIAWDVTALGLPHSGQPFATGRFTQHIEVPGIWLERGTIDAADGLLMDGRLGLAGHRCLASVFFVAGEALPRERREAALDAARAVIDAHALRETAGATSPHPQVVVVRVLAPVVEPAMELLRRAWGAWREHLWGLQPRQPRIWAM.

This sequence belongs to the UreD family. In terms of assembly, ureD, UreF and UreG form a complex that acts as a GTP-hydrolysis-dependent molecular chaperone, activating the urease apoprotein by helping to assemble the nickel containing metallocenter of UreC. The UreE protein probably delivers the nickel.

The protein resides in the cytoplasm. Its function is as follows. Required for maturation of urease via the functional incorporation of the urease nickel metallocenter. The protein is Urease accessory protein UreD of Paracidovorax citrulli (strain AAC00-1) (Acidovorax citrulli).